We begin with the raw amino-acid sequence, 492 residues long: Protein nucleotidyltransferase YdiU (492 aa).

8 residues coordinate ATP: G91, G93, R94, K114, D126, G127, R177, and R184. D253 functions as the Proton acceptor in the catalytic mechanism. Positions 254 and 263 each coordinate Mg(2+). Residue D263 coordinates ATP.

This sequence belongs to the SELO family. It depends on Mg(2+) as a cofactor. Requires Mn(2+) as cofactor.

The enzyme catalyses L-seryl-[protein] + ATP = 3-O-(5'-adenylyl)-L-seryl-[protein] + diphosphate. It catalyses the reaction L-threonyl-[protein] + ATP = 3-O-(5'-adenylyl)-L-threonyl-[protein] + diphosphate. The catalysed reaction is L-tyrosyl-[protein] + ATP = O-(5'-adenylyl)-L-tyrosyl-[protein] + diphosphate. It carries out the reaction L-histidyl-[protein] + UTP = N(tele)-(5'-uridylyl)-L-histidyl-[protein] + diphosphate. The enzyme catalyses L-seryl-[protein] + UTP = O-(5'-uridylyl)-L-seryl-[protein] + diphosphate. It catalyses the reaction L-tyrosyl-[protein] + UTP = O-(5'-uridylyl)-L-tyrosyl-[protein] + diphosphate. Its function is as follows. Nucleotidyltransferase involved in the post-translational modification of proteins. It can catalyze the addition of adenosine monophosphate (AMP) or uridine monophosphate (UMP) to a protein, resulting in modifications known as AMPylation and UMPylation. The protein is Protein nucleotidyltransferase YdiU of Maridesulfovibrio salexigens (strain ATCC 14822 / DSM 2638 / NCIMB 8403 / VKM B-1763) (Desulfovibrio salexigens).